A 119-amino-acid chain; its full sequence is Large ribosomal subunit protein bL20 (119 aa).

Belongs to the bacterial ribosomal protein bL20 family.

Binds directly to 23S ribosomal RNA and is necessary for the in vitro assembly process of the 50S ribosomal subunit. It is not involved in the protein synthesizing functions of that subunit. The chain is Large ribosomal subunit protein bL20 from Polaromonas sp. (strain JS666 / ATCC BAA-500).